We begin with the raw amino-acid sequence, 380 residues long: Queuine tRNA-ribosyltransferase (380 aa).

Asp-96 functions as the Proton acceptor in the catalytic mechanism. Substrate is bound by residues Asp-96 to Phe-100, Asp-150, Gln-193, and Gly-220. The interval Gly-251–Ser-257 is RNA binding. The active-site Nucleophile is the Asp-270. An RNA binding; important for wobble base 34 recognition region spans residues Thr-275–Arg-279. Residues Cys-308, Cys-310, Cys-313, and His-339 each contribute to the Zn(2+) site.

The protein belongs to the queuine tRNA-ribosyltransferase family. As to quaternary structure, homodimer. Within each dimer, one monomer is responsible for RNA recognition and catalysis, while the other monomer binds to the replacement base PreQ1. It depends on Zn(2+) as a cofactor.

It catalyses the reaction 7-aminomethyl-7-carbaguanine + guanosine(34) in tRNA = 7-aminomethyl-7-carbaguanosine(34) in tRNA + guanine. It participates in tRNA modification; tRNA-queuosine biosynthesis. Catalyzes the base-exchange of a guanine (G) residue with the queuine precursor 7-aminomethyl-7-deazaguanine (PreQ1) at position 34 (anticodon wobble position) in tRNAs with GU(N) anticodons (tRNA-Asp, -Asn, -His and -Tyr). Catalysis occurs through a double-displacement mechanism. The nucleophile active site attacks the C1' of nucleotide 34 to detach the guanine base from the RNA, forming a covalent enzyme-RNA intermediate. The proton acceptor active site deprotonates the incoming PreQ1, allowing a nucleophilic attack on the C1' of the ribose to form the product. After dissociation, two additional enzymatic reactions on the tRNA convert PreQ1 to queuine (Q), resulting in the hypermodified nucleoside queuosine (7-(((4,5-cis-dihydroxy-2-cyclopenten-1-yl)amino)methyl)-7-deazaguanosine). This is Queuine tRNA-ribosyltransferase from Streptococcus equi subsp. equi (strain 4047).